Reading from the N-terminus, the 408-residue chain is MTFLQRLQGLADNKICAFAWFVVRRFDEERVPQAAASMTFTTLLALVPVLTVMVAVASIFPVFDRWSDSFVSFVNQTIVPQGADMVFDYINAFREQANRLTAIGSVMLVVTSLMLIRTIDNTFNRIWRVNSQRPWMMQFLVYWALLTFGPLSLGVGISFMVGSVQDAALASGAPQWSGALRTAATLTFMTLLLWGLYRFVPNRFVPARQAFVGALATAFCLETARSLFTWYMGNFDGYRSIYGAFAAVPFFLLWLNLLWTLVLGGAVLTSSLSYWQGEAFRRGFDSRGRFDDVLKILLLLDAAQKEGKALPVQEFRRHINMGYDELGELLEKLARHGYIYSGRQGWVLKTGADSIELNELFKLFVYRPLPVERDHVNQAVDAVMMPCLQTLNMTLAEFDAQAKKQQQS.

Helical transmembrane passes span 43–63, 100–120, 139–159, 176–196, 210–230, and 248–268; these read LLALVPVLTVMVAVASIFPVF, LTAIGSVMLVVTSLMLIRTID, FLVYWALLTFGPLSLGVGISF, WSGALRTAATLTFMTLLLWGL, AFVGALATAFCLETARSLFTW, and VPFFLLWLNLLWTLVLGGAVL.

It belongs to the UPF0761 family.

It localises to the cell inner membrane. The chain is UPF0761 membrane protein NMCC_0461 from Neisseria meningitidis serogroup C (strain 053442).